The chain runs to 230 residues: Orotidine 5'-phosphate decarboxylase (230 aa).

Substrate contacts are provided by residues Asp-10, Lys-31, Asp-58–Thr-67, Thr-117, Arg-179, Gln-188, Gly-208, and Arg-209. Residue Lys-60 is the Proton donor of the active site.

Belongs to the OMP decarboxylase family. Type 1 subfamily. Homodimer.

It carries out the reaction orotidine 5'-phosphate + H(+) = UMP + CO2. The protein operates within pyrimidine metabolism; UMP biosynthesis via de novo pathway; UMP from orotate: step 2/2. Its function is as follows. Catalyzes the decarboxylation of orotidine 5'-monophosphate (OMP) to uridine 5'-monophosphate (UMP). The protein is Orotidine 5'-phosphate decarboxylase of Staphylococcus haemolyticus (strain JCSC1435).